Consider the following 351-residue polypeptide: Histidinol-phosphate aminotransferase (351 aa).

An N6-(pyridoxal phosphate)lysine modification is found at lysine 209.

Belongs to the class-II pyridoxal-phosphate-dependent aminotransferase family. Histidinol-phosphate aminotransferase subfamily. In terms of assembly, homodimer. Requires pyridoxal 5'-phosphate as cofactor.

The enzyme catalyses L-histidinol phosphate + 2-oxoglutarate = 3-(imidazol-4-yl)-2-oxopropyl phosphate + L-glutamate. It participates in amino-acid biosynthesis; L-histidine biosynthesis; L-histidine from 5-phospho-alpha-D-ribose 1-diphosphate: step 7/9. The chain is Histidinol-phosphate aminotransferase from Chromohalobacter salexigens (strain ATCC BAA-138 / DSM 3043 / CIP 106854 / NCIMB 13768 / 1H11).